A 249-amino-acid chain; its full sequence is Aspartate/glutamate leucyltransferase (249 aa).

The protein belongs to the R-transferase family. Bpt subfamily.

Its subcellular location is the cytoplasm. The enzyme catalyses N-terminal L-glutamyl-[protein] + L-leucyl-tRNA(Leu) = N-terminal L-leucyl-L-glutamyl-[protein] + tRNA(Leu) + H(+). It carries out the reaction N-terminal L-aspartyl-[protein] + L-leucyl-tRNA(Leu) = N-terminal L-leucyl-L-aspartyl-[protein] + tRNA(Leu) + H(+). Functions in the N-end rule pathway of protein degradation where it conjugates Leu from its aminoacyl-tRNA to the N-termini of proteins containing an N-terminal aspartate or glutamate. The protein is Aspartate/glutamate leucyltransferase of Xanthobacter autotrophicus (strain ATCC BAA-1158 / Py2).